We begin with the raw amino-acid sequence, 40 residues long: Meleagrin (40 aa).

The residue at position 1 (Gln1) is a Pyrrolidone carboxylic acid. 3 cysteine pairs are disulfide-bonded: Cys6–Cys33, Cys12–Cys28, and Cys16–Cys32.

It belongs to the transferrin family.

The sequence is that of Meleagrin from Meleagris gallopavo (Wild turkey).